We begin with the raw amino-acid sequence, 155 residues long: UPF0060 membrane protein MA_3936 (155 aa).

A run of 3 helical transmembrane segments spans residues 8 to 28 (LCPFFLAALFEIRGGYLICLW), 35 to 55 (AVFGPLGRLMLAVCGIIPTFQ), and 62 to 82 (VYAAHGGIFIVFSLIWDLFVD).

It belongs to the UPF0060 family.

It is found in the cell membrane. In Methanosarcina acetivorans (strain ATCC 35395 / DSM 2834 / JCM 12185 / C2A), this protein is UPF0060 membrane protein MA_3936.